A 1035-amino-acid chain; its full sequence is MYSKLMFFFALCSISFLFTSEAASTMLLESSYLPLNQSYAPGFLYKRDMLPPPLQAVLTYTCPEPRPLAEESYNDLLRAISQKSSSDFQNAYSLALSFSSDFYQHGLKTLKDVSFLAVEKFLWGLTRLWSSLILASFSALWWLVSNFTTPVFCLALLYTVTKYMVKTVSFLFGGLPIWIISIAFSLLKKSFSALRSTPKCLYEKAIDGFKSFTIPQSPPKSCVIPITHASGNHAGYASCIKLYNGENALMTATHVLRDCPNAVAVSAKGLKTRIPLAEFKTIAKSDKGDVTLLRGPPNWEGLLGCKAANVITAANLAKCKASIYSFDRDGWVSSYAEIVGSEGTDVMVLSHTEGGHSGSPYFNGKTILGVHSGASATGNYNLMAPIPSLPGLTSPTYVFETTAPQGRVFAQEDIAEIEGLYAQVMKRVQQAEDFKPKTGKYWGDMEDDEDIFFESKEDLSGKRSARHRPRNKRRRQLHPKDKQRRWERDDGENNLISSGKDKSREHREESDRGDLRESDENSEIPPQKSPKETAGEFERYFSSLYNWEVPTSPREVPGFRHCGKLPQYYHPKQKEESSWGKTLVGNHPALGEKTSGFGWPKFGPEAELKSLRLQASRWLERAQSAEIPSDAERERVIQKTADVYHPCQTNGPAATRGGTLTWNNFMIDFKQAVFSLEFDAGIELPYIAYGKPTHRGWVEDQKLLPILAQLTFFRLQKMLEVNFEDMGPEELVRNGLCDPIRLFVKGEPHKQAKLDEGRYRLIMSVSLVDQLVARVLFQNQNKREIALWRAIPSKPGFGLSTDEQVLDFVESLARQVGTTTTEVVANWKNYLTPTDCSGFDWSVADWMLHDDMIVRNRLTIDLNPATERLRSCWLRCISNSVLCLSDGTLLAQIHPGVQKSGSYNTSSSNSRIRVMAAFHTGAIWAMAMGDDALESNPADLAAYKKLGFKVEVSGQLEFCSHIFRAPDLALPVNENKMIYKLIYGYNPGSGNAEVVSNYLAACFSVLNELRHDPASVELLYSWLVDPVLPQKIPGE.

The first 22 residues, 1–22 (MYSKLMFFFALCSISFLFTSEA), serve as a signal peptide directing secretion. 3 consecutive transmembrane segments (helical) span residues 115 to 135 (FLAVEKFLWGLTRLWSSLILA), 137 to 157 (FSALWWLVSNFTTPVFCLALL), and 167 to 187 (TVSFLFGGLPIWIISIAFSLL). The Peptidase S39 domain maps to 206 to 400 (IDGFKSFTIP…GLTSPTYVFE (195 aa)). Catalysis depends on for protease activity residues histidine 254, aspartate 289, and serine 357. The segment at 455 to 534 (SKEDLSGKRS…PPQKSPKETA (80 aa)) is disordered. The segment covering 463–477 (RSARHRPRNKRRRQL) has biased composition (basic residues). 2 stretches are compositionally biased toward basic and acidic residues: residues 478-488 (HPKDKQRRWER) and 499-519 (GKDKSREHREESDRGDLRESD). Residues 829 to 944 (NYLTPTDCSG…SNPADLAAYK (116 aa)) form the RdRp catalytic domain.

In terms of processing, specific enzymatic cleavages in vivo yield mature proteins. The protease probably cleaves itself and releases the RdRp (Potential). Cleavages have been shown in the P1 protein, but since the N-terminus containing the serine protease is shared between P1 and P1-P2, cleavages should also occur within the P1-P2 protein.

The protein localises to the membrane. It carries out the reaction RNA(n) + a ribonucleoside 5'-triphosphate = RNA(n+1) + diphosphate. Functionally, precursor from which the RNA-dependent RNA polymerase (RdRp) is probably released. RNA-dependent RNA polymerase plays an essential role in virus replication (Potential). The protein is Protein P1-P2 of Turnip yellows virus (isolate FL-1) (TuYV).